We begin with the raw amino-acid sequence, 156 residues long: DNA mismatch endonuclease Vsr (156 aa).

Asp-51 and Thr-63 together coordinate Mg(2+).

This sequence belongs to the Vsr family. Mg(2+) serves as cofactor. Zn(2+) is required as a cofactor.

In terms of biological role, deamination of 5-methylcytosine in DNA results in T/G mismatches. If unrepaired, these mismatches can lead to C-to-T transition mutations. The very short patch (VSP) repair process in E.coli counteracts the mutagenic process by repairing the mismatches in favor of the G-containing strand. This enzyme is an endonuclease that nicks double-stranded DNA within the sequence CT(AT)GN or NT(AT)GG next to the thymidine residue that is mismatched to 2'-deoxyguanosine. The incision is mismatch-dependent and strand-specific. In Escherichia coli (strain K12), this protein is DNA mismatch endonuclease Vsr.